Reading from the N-terminus, the 360-residue chain is Peptide chain release factor 1 (360 aa).

Q234 bears the N5-methylglutamine mark. The disordered stretch occupies residues 285–305 (RAQGIAEDRKSQVGTGDRSER).

It belongs to the prokaryotic/mitochondrial release factor family. In terms of processing, methylated by PrmC. Methylation increases the termination efficiency of RF1.

Its subcellular location is the cytoplasm. In terms of biological role, peptide chain release factor 1 directs the termination of translation in response to the peptide chain termination codons UAG and UAA. This Clostridium beijerinckii (strain ATCC 51743 / NCIMB 8052) (Clostridium acetobutylicum) protein is Peptide chain release factor 1.